The primary structure comprises 324 residues: Protease HtpX homolog (324 aa).

Transmembrane regions (helical) follow at residues Ala-7 to Ile-24 and Gly-29 to Trp-46. His-130 contributes to the Zn(2+) binding site. Glu-131 is an active-site residue. His-134 contributes to the Zn(2+) binding site. 2 consecutive transmembrane segments (helical) span residues Ile-145–Gly-165 and Gly-172–Val-192. A Zn(2+)-binding site is contributed by Glu-201. The span at Pro-288–Pro-305 shows a compositional bias: polar residues. The tract at residues Pro-288–Gly-324 is disordered.

This sequence belongs to the peptidase M48B family. The cofactor is Zn(2+).

The protein localises to the cell inner membrane. The polypeptide is Protease HtpX homolog (Rhodopseudomonas palustris (strain TIE-1)).